We begin with the raw amino-acid sequence, 359 residues long: MDLNTILIILGILALVALVAHGLWSNRREKSQYFENANTFGRANRQDEPISTPESYKQARNVAPAFTQPKQAVIHQEPPVQQPLNTEPEPITQETPVRAEPQSVDQIKITLPNVEPAPAESAPIYEMRPSRRNTEPQYYQQPSEPYYQQPVQQNLARQTIADIEATVDPNEGVNSSSEYLRTQLQEASQEGNQIFTQSPLSRAPLQQPIEFDQPAQQEKESDNNEDEDVSFVMLYVAAAENRQFQGTVLVQALEDLGFSLGEDNLYHRHLDLTVASPVLFSAANITQPGTFNPYTLHEFFTDGVAIFMRLPSPGNDRTNLKIMIRSAKTLAQQLGGFVLTEQQELFTDAAEEEYLAKIK.

Topologically, residues 1–4 are periplasmic; it reads MDLN. A helical transmembrane segment spans residues 5-25; sequence TILIILGILALVALVAHGLWS. The Cytoplasmic segment spans residues 26 to 359; it reads NRREKSQYFE…AEEEYLAKIK (334 aa). The tract at residues 78–101 is disordered; sequence PPVQQPLNTEPEPITQETPVRAEP.

This sequence belongs to the ZipA family. As to quaternary structure, interacts with FtsZ via their C-terminal domains.

The protein resides in the cell inner membrane. Functionally, essential cell division protein that stabilizes the FtsZ protofilaments by cross-linking them and that serves as a cytoplasmic membrane anchor for the Z ring. Also required for the recruitment to the septal ring of downstream cell division proteins. This is Cell division protein ZipA from Mannheimia succiniciproducens (strain KCTC 0769BP / MBEL55E).